A 25-amino-acid polypeptide reads, in one-letter code: Unknown protein 4 (25 aa).

Basic and acidic residues predominate over residues 1 to 10 (IEHNAEEIRK). Positions 1–25 (IEHNAEEIRKTAIRTAVQNTAQQTK) are disordered. Residues 16-25 (AVQNTAQQTK) show a composition bias toward polar residues.

In Lonomia obliqua (Moth), this protein is Unknown protein 4.